A 352-amino-acid chain; its full sequence is Ketol-acid reductoisomerase (NAD(+)) (352 aa).

One can recognise a KARI N-terminal Rossmann domain in the interval 11 to 199 (ENVVTSEEFT…AIGSGYLFPT (189 aa)). Residues 38–41 (YGVQ) and 100–103 (DAGQ) contribute to the NAD(+) site. The active site involves histidine 124. Glycine 153 is an NAD(+) binding site. The KARI C-terminal knotted domain maps to 200 to 347 (TFEKEVFSDL…AAVRALRPEN (148 aa)). Mg(2+) contacts are provided by aspartate 208, glutamate 212, glutamate 244, and glutamate 248. Serine 270 is a binding site for substrate.

It belongs to the ketol-acid reductoisomerase family. It depends on Mg(2+) as a cofactor.

The enzyme catalyses (2R)-2,3-dihydroxy-3-methylbutanoate + NAD(+) = (2S)-2-acetolactate + NADH + H(+). Its pathway is amino-acid biosynthesis; L-isoleucine biosynthesis; L-isoleucine from 2-oxobutanoate: step 2/4. It participates in amino-acid biosynthesis; L-valine biosynthesis; L-valine from pyruvate: step 2/4. Functionally, involved in the biosynthesis of branched-chain amino acids (BCAA). Catalyzes an alkyl-migration followed by a ketol-acid reduction of (S)-2-acetolactate (S2AL) to yield (R)-2,3-dihydroxy-isovalerate. In the isomerase reaction, S2AL is rearranged via a Mg-dependent methyl migration to produce 3-hydroxy-3-methyl-2-ketobutyrate (HMKB). In the reductase reaction, this 2-ketoacid undergoes a metal-dependent reduction by NADH to yield (R)-2,3-dihydroxy-isovalerate. This chain is Ketol-acid reductoisomerase (NAD(+)), found in Desulfosudis oleivorans (strain DSM 6200 / JCM 39069 / Hxd3) (Desulfococcus oleovorans).